A 334-amino-acid chain; its full sequence is Nucleoid-associated protein SG1574 (334 aa).

Belongs to the YejK family.

It localises to the cytoplasm. It is found in the nucleoid. This Sodalis glossinidius (strain morsitans) protein is Nucleoid-associated protein SG1574.